The following is a 655-amino-acid chain: Tetratricopeptide repeat protein 30 homolog (655 aa).

TPR repeat units lie at residues 10 to 43, 44 to 76, 143 to 176, 178 to 210, 385 to 418, 450 to 484, and 534 to 567; these read EGHV…ANTR, AGLS…APKE, ADTL…GGFN, LVAY…GMRN, LAAK…YLPV, SIWR…HSDD, and CIVN…GSGN.

Belongs to the TTC30/dfy-1/fleer family.

The protein localises to the cell projection. It localises to the cilium. In terms of biological role, required for polyglutamylation of axonemal tubulin in sensory cilia. Plays a role in anterograde intraflagellar transport (IFT), the process by which cilia precursors are transported from the base of the cilium to the site of their incorporation at the tip. This chain is Tetratricopeptide repeat protein 30 homolog, found in Drosophila melanogaster (Fruit fly).